Consider the following 194-residue polypeptide: Pyridoxal 5'-phosphate synthase subunit PdxT (194 aa).

L-glutamine is bound at residue 50 to 52 (GES). Cys82 functions as the Nucleophile in the catalytic mechanism. L-glutamine is bound by residues Arg109 and 136-137 (IR). Catalysis depends on charge relay system residues His172 and Glu174.

Belongs to the glutaminase PdxT/SNO family. As to quaternary structure, in the presence of PdxS, forms a dodecamer of heterodimers. Only shows activity in the heterodimer.

The catalysed reaction is aldehydo-D-ribose 5-phosphate + D-glyceraldehyde 3-phosphate + L-glutamine = pyridoxal 5'-phosphate + L-glutamate + phosphate + 3 H2O + H(+). It catalyses the reaction L-glutamine + H2O = L-glutamate + NH4(+). It participates in cofactor biosynthesis; pyridoxal 5'-phosphate biosynthesis. In terms of biological role, catalyzes the hydrolysis of glutamine to glutamate and ammonia as part of the biosynthesis of pyridoxal 5'-phosphate. The resulting ammonia molecule is channeled to the active site of PdxS. This Streptococcus pneumoniae (strain CGSP14) protein is Pyridoxal 5'-phosphate synthase subunit PdxT.